Consider the following 266-residue polypeptide: Phosphoethanolamine N-methyltransferase (266 aa).

Residue Q18 participates in phosphoethanolamine binding. Y19 is a catalytic residue. Y27 contacts phosphoethanolamine. Residues I36, S37, G63, D85, I86, D110, I111, and R127 each contribute to the S-adenosyl-L-methionine site. H132 is a catalytic residue. Residues Y160, Y175, R179, Y181, and K247 each contribute to the phosphoethanolamine site.

It belongs to the class I-like SAM-binding methyltransferase superfamily. PEAMT family. In terms of assembly, monomer.

The protein localises to the golgi apparatus membrane. It localises to the cytoplasm. The catalysed reaction is phosphoethanolamine + S-adenosyl-L-methionine = N-methylethanolamine phosphate + S-adenosyl-L-homocysteine + H(+). The enzyme catalyses N-methylethanolamine phosphate + S-adenosyl-L-methionine = N,N-dimethylethanolamine phosphate + S-adenosyl-L-homocysteine + H(+). It catalyses the reaction N,N-dimethylethanolamine phosphate + S-adenosyl-L-methionine = phosphocholine + S-adenosyl-L-homocysteine + H(+). Its pathway is phospholipid metabolism; phosphatidylcholine biosynthesis; phosphocholine from phosphoethanolamine. Its activity is regulated as follows. Inhibited by phosphocholine. Inhibited by hexadecylphosphocholine (miltefosine). Inhibited by S-adenosyl-l-homocysteine. Weakly inhibited in vitro by amodiaquine, chloroquine and primaquine. Inhibited by NSC-158011. Catalyzes N-methylation of phosphoethanolamine, phosphomonomethylethanolamine and phosphodimethylethanolamine, the three methylation steps required to convert phosphoethanolamine to phosphocholine. Has no ethanolamine- or phosphatidylethanolamine-N-methyltransferase activity. Required for gametocyte development, maturation and transmission to mosquitoes and for oocyst formation in the mosquito midgut. The sequence is that of Phosphoethanolamine N-methyltransferase from Plasmodium falciparum (isolate 3D7).